A 100-amino-acid polypeptide reads, in one-letter code: Large ribosomal subunit protein bL27 (100 aa).

The propeptide occupies 1-9 (MLKMNLQLF).

It belongs to the bacterial ribosomal protein bL27 family. Post-translationally, the N-terminus is cleaved by ribosomal processing cysteine protease Prp.

The protein is Large ribosomal subunit protein bL27 of Clostridium perfringens (strain ATCC 13124 / DSM 756 / JCM 1290 / NCIMB 6125 / NCTC 8237 / Type A).